Reading from the N-terminus, the 512-residue chain is Cytochrome P450 26B1 (512 aa).

A heme-binding site is contributed by Cys441.

It belongs to the cytochrome P450 family. Heme is required as a cofactor.

It is found in the endoplasmic reticulum membrane. Its subcellular location is the microsome membrane. It carries out the reaction all-trans-retinoate + reduced [NADPH--hemoprotein reductase] + O2 = all-trans-4-hydroxyretinoate + oxidized [NADPH--hemoprotein reductase] + H2O + H(+). The catalysed reaction is all-trans-retinoate + reduced [NADPH--hemoprotein reductase] + O2 = all-trans-18-hydroxyretinoate + oxidized [NADPH--hemoprotein reductase] + H2O + H(+). Its function is as follows. A cytochrome P450 monooxygenase involved in the metabolism of retinoates (RAs), the active metabolites of vitamin A, and critical signaling molecules in animals. RAs exist as at least four different isomers: all-trans-RA (atRA), 9-cis-RA, 13-cis-RA, and 9,13-dicis-RA, where atRA is considered to be the biologically active isomer, although 9-cis-RA and 13-cis-RA also have activity. Catalyzes the hydroxylation of atRA primarily at C-4 and C-18, thereby contributing to the regulation of atRA homeostasis and signaling. Hydroxylation of atRA limits its biological activity and initiates a degradative process leading to its eventual elimination. Involved in the convertion of atRA to all-trans-4-oxo-RA. Can oxidize all-trans-13,14-dihydroretinoate (DRA) to metabolites which could include all-trans-4-oxo-DRA, all-trans-4-hydroxy-DRA, all-trans-5,8-epoxy-DRA, and all-trans-18-hydroxy-DRA. Shows preference for the following substrates: atRA &gt; 9-cis-RA &gt; 13-cis-RA. Plays a central role in germ cell development: acts by degrading RAs in the developing testis, preventing STRA8 expression, thereby leading to delay of meiosis. Required for the maintenance of the undifferentiated state of male germ cells during embryonic development in Sertoli cells, inducing arrest in G0 phase of the cell cycle and preventing meiotic entry. Plays a role in skeletal development, both at the level of patterning and in the ossification of bone and the establishment of some synovial joints. Essential for postnatal survival. Also has a significant activity in oxidation of tazarotenic acid and may therefore metabolize that xenobiotic in vivo. The chain is Cytochrome P450 26B1 (CYP26B1) from Bos taurus (Bovine).